Here is a 340-residue protein sequence, read N- to C-terminus: MTRDIVITEVALRDGSHAINHQFTVEQVVEVASALDEANVPYIEVSHGDGLAGSSLQYGLSRTPELELIEAAVSVCKQAKVGVLLLPGIGTIKDLKTAAALGVGMARIATHATEADVSAQHIYQAKELGLTTAGFLMMAHMAAPEKLAEQARLMQSYGADVVYIVDSAGALLPDQAGERVRALKQCLHVPVGFHAHNNLSLAMANTLVAIQEGATWIDGSVRCLGAGAGNTQTEVLLAVLDRMGIQTGVDLYKMMDLAEDIVSPILQVPQEITRDALVLGYAGVYSSFRLHAERAARKFGIDSRDILIELGRRKVVGGQEDMIVDVAAEIAQRYSSTKIR.

The Pyruvate carboxyltransferase domain occupies 5-255 (IVITEVALRD…QTGVDLYKMM (251 aa)). A substrate-binding site is contributed by 13–14 (RD). A Mn(2+)-binding site is contributed by Asp-14. His-17 serves as the catalytic Proton acceptor. Residues Ser-167 and His-194 each coordinate substrate. Residues His-194 and His-196 each coordinate Mn(2+). Position 285 (Tyr-285) interacts with substrate.

It belongs to the 4-hydroxy-2-oxovalerate aldolase family.

It catalyses the reaction (S)-4-hydroxy-2-oxopentanoate = acetaldehyde + pyruvate. The protein is 4-hydroxy-2-oxovalerate aldolase of Brevibacillus brevis (strain 47 / JCM 6285 / NBRC 100599).